A 125-amino-acid chain; its full sequence is Protein JAZ13 (125 aa).

The EAR motif lies at 6-10; that stretch reads LDLHL. Positions 99–125 are disordered; sequence KKRSKSFTLTPNYTSSTSSSSSSLHNF. Residues 112–125 show a composition bias toward low complexity; that stretch reads TSSTSSSSSSLHNF.

Monomer. Lack of homodimerization, and very weak or no interaction with AFPH2/NINJA and other JAZ proteins. Interacts (via EAR motif) with TPL. Interacts (via jas motif) with MYC2. Post-translationally, phosphorylated at multiple serine residues.

Its function is as follows. Non-TIFY functional repressor of jasmonate (JA)-mediated growth and defense responses. Intrinsically resistant to JA-induced turnover, probably due to the absence of the canonical degron that strongly interacts with COI1 in the presence of JA-Ile in the TIFY/JAZ proteins. This chain is Protein JAZ13, found in Arabidopsis thaliana (Mouse-ear cress).